The chain runs to 446 residues: Glucosylglycerate hydrolase (446 aa).

Residues Tyr36, 40 to 43 (WSWD), Tyr88, Gln115, and Gly180 each bind substrate. Residue Asp182 is the Proton donor of the active site. Substrate is bound by residues Arg216 and 375–376 (YW). Catalysis depends on Glu419, which acts as the Proton acceptor. Gln434 contacts substrate.

It belongs to the glycosyl hydrolase 63 family. In terms of assembly, homotetramer. Dimer of dimers.

The enzyme catalyses (2R)-2-O-(alpha-D-glucopyranosyl)-glycerate + H2O = (R)-glycerate + D-glucose. Activity is not dependent on divalent cations, but it is enhanced by Mg(2+). Functionally, catalyzes the hydrolysis of glucosylglycerate (GG) to glycerate and glucose. Involved in recovery from nitrogen starvation by promoting the rapid mobilization of the glucosylglycerate that accumulates under these conditions. Can also hydrolyze mannosylglycerate (MG), with tenfold lower efficiency. This chain is Glucosylglycerate hydrolase, found in Mycolicibacterium hassiacum (strain DSM 44199 / CIP 105218 / JCM 12690 / 3849) (Mycobacterium hassiacum).